The sequence spans 200 residues: MPEASTSAPRQATVTRKTSETDISATLSLDGTGTSSIQTGVGFLDHMLTSFSRHSRIDLAVICKGDLEVDDHHSVEDVAIVIGSAILQALGSRAGIRRFGSALVPMDESLARAAVDLGGRSFAVVKAEFGRPVIQGMSTEMVGHFFTSIASGLKANIHIAVLDGHNTHHMIEAMFKAFALAMKDAVCIEGGGIPSTKGVL.

The protein belongs to the imidazoleglycerol-phosphate dehydratase family.

It localises to the cytoplasm. The catalysed reaction is D-erythro-1-(imidazol-4-yl)glycerol 3-phosphate = 3-(imidazol-4-yl)-2-oxopropyl phosphate + H2O. It participates in amino-acid biosynthesis; L-histidine biosynthesis; L-histidine from 5-phospho-alpha-D-ribose 1-diphosphate: step 6/9. The polypeptide is Imidazoleglycerol-phosphate dehydratase (Chlorobium luteolum (strain DSM 273 / BCRC 81028 / 2530) (Pelodictyon luteolum)).